A 150-amino-acid polypeptide reads, in one-letter code: Macrodomain Ter protein (150 aa).

Belongs to the MatP family. In terms of assembly, homodimer.

Its subcellular location is the cytoplasm. In terms of biological role, required for spatial organization of the terminus region of the chromosome (Ter macrodomain) during the cell cycle. Prevents early segregation of duplicated Ter macrodomains during cell division. Binds specifically to matS, which is a 13 bp signature motif repeated within the Ter macrodomain. The polypeptide is Macrodomain Ter protein (Shigella dysenteriae serotype 1 (strain Sd197)).